Reading from the N-terminus, the 327-residue chain is Delta-aminolevulinic acid dehydratase (327 aa).

3 residues coordinate Zn(2+): Cys-119, Cys-121, and Cys-129. Lys-198 functions as the Schiff-base intermediate with substrate in the catalytic mechanism. 5-aminolevulinate contacts are provided by Arg-208 and Arg-220. Glu-236 provides a ligand contact to Mg(2+). Residue Lys-251 is the Schiff-base intermediate with substrate of the active site. Positions 277 and 316 each coordinate 5-aminolevulinate.

This sequence belongs to the ALAD family. As to quaternary structure, homooctamer. Zn(2+) is required as a cofactor.

The enzyme catalyses 2 5-aminolevulinate = porphobilinogen + 2 H2O + H(+). The protein operates within porphyrin-containing compound metabolism; protoporphyrin-IX biosynthesis; coproporphyrinogen-III from 5-aminolevulinate: step 1/4. Catalyzes an early step in the biosynthesis of tetrapyrroles. Binds two molecules of 5-aminolevulinate per subunit, each at a distinct site, and catalyzes their condensation to form porphobilinogen. This chain is Delta-aminolevulinic acid dehydratase (hemB), found in Synechocystis sp. (strain ATCC 27184 / PCC 6803 / Kazusa).